We begin with the raw amino-acid sequence, 204 residues long: dITP/XTP pyrophosphatase (204 aa).

Position 8–13 (8–13 (SNNAKK)) interacts with substrate. 2 residues coordinate Mg(2+): Glu-43 and Asp-72. The active-site Proton acceptor is Asp-72. Substrate is bound by residues Ser-73, 155–158 (FGYD), Lys-180, and 185–186 (HR).

This sequence belongs to the HAM1 NTPase family. In terms of assembly, homodimer. Mg(2+) is required as a cofactor.

It carries out the reaction XTP + H2O = XMP + diphosphate + H(+). The enzyme catalyses dITP + H2O = dIMP + diphosphate + H(+). The catalysed reaction is ITP + H2O = IMP + diphosphate + H(+). Its function is as follows. Pyrophosphatase that catalyzes the hydrolysis of nucleoside triphosphates to their monophosphate derivatives, with a high preference for the non-canonical purine nucleotides XTP (xanthosine triphosphate), dITP (deoxyinosine triphosphate) and ITP. Seems to function as a house-cleaning enzyme that removes non-canonical purine nucleotides from the nucleotide pool, thus preventing their incorporation into DNA/RNA and avoiding chromosomal lesions. The chain is dITP/XTP pyrophosphatase from Cutibacterium acnes (strain DSM 16379 / KPA171202) (Propionibacterium acnes).